We begin with the raw amino-acid sequence, 256 residues long: 5-oxoprolinase subunit A 1 (256 aa).

Belongs to the LamB/PxpA family. As to quaternary structure, forms a complex composed of PxpA, PxpB and PxpC.

The enzyme catalyses 5-oxo-L-proline + ATP + 2 H2O = L-glutamate + ADP + phosphate + H(+). Catalyzes the cleavage of 5-oxoproline to form L-glutamate coupled to the hydrolysis of ATP to ADP and inorganic phosphate. The sequence is that of 5-oxoprolinase subunit A 1 from Pseudomonas syringae pv. tomato (strain ATCC BAA-871 / DC3000).